Consider the following 498-residue polypeptide: Ribose import ATP-binding protein RbsA (498 aa).

ABC transporter domains follow at residues 2–237 and 247–491; these read LALQ…VGRD and VTPG…TGQQ. Residue 34-41 participates in ATP binding; sequence GENGAGKS.

Belongs to the ABC transporter superfamily. Ribose importer (TC 3.A.1.2.1) family. As to quaternary structure, the complex is composed of an ATP-binding protein (RbsA), two transmembrane proteins (RbsC) and a solute-binding protein (RbsB).

It is found in the cell membrane. It carries out the reaction D-ribose(out) + ATP + H2O = D-ribose(in) + ADP + phosphate + H(+). Part of the ABC transporter complex RbsABC involved in ribose import. Responsible for energy coupling to the transport system. The chain is Ribose import ATP-binding protein RbsA from Deinococcus geothermalis (strain DSM 11300 / CIP 105573 / AG-3a).